A 328-amino-acid polypeptide reads, in one-letter code: Octanoyltransferase, mitochondrial (328 aa).

Residues 108–312 (MKPNPIILTF…EMTKLLGIKT (205 aa)) form the BPL/LPL catalytic domain. Substrate-binding positions include 162 to 169 (RGGQVTFH), 241 to 243 (SVG), and 254 to 256 (GVA). Cys272 acts as the Acyl-thioester intermediate in catalysis.

The protein belongs to the LipB family.

The protein localises to the mitochondrion. The enzyme catalyses octanoyl-[ACP] + L-lysyl-[protein] = N(6)-octanoyl-L-lysyl-[protein] + holo-[ACP] + H(+). It functions in the pathway protein modification; protein lipoylation via endogenous pathway; protein N(6)-(lipoyl)lysine from octanoyl-[acyl-carrier-protein]: step 1/2. Catalyzes the transfer of endogenously produced octanoic acid from octanoyl-acyl-carrier-protein onto the lipoyl domains of lipoate-dependent enzymes. Lipoyl-ACP can also act as a substrate although octanoyl-ACP is likely to be the physiological substrate. The polypeptide is Octanoyltransferase, mitochondrial (LIP2) (Saccharomyces cerevisiae (strain ATCC 204508 / S288c) (Baker's yeast)).